Reading from the N-terminus, the 396-residue chain is 1-deoxy-D-xylulose 5-phosphate reductoisomerase (396 aa).

The NADPH site is built by T17, G18, S19, I20, N47, and N130. Position 131 (K131) interacts with 1-deoxy-D-xylulose 5-phosphate. Residue E132 participates in NADPH binding. A Mn(2+)-binding site is contributed by D156. Positions 157, 158, 182, and 205 each coordinate 1-deoxy-D-xylulose 5-phosphate. E158 serves as a coordination point for Mn(2+). G211 provides a ligand contact to NADPH. 1-deoxy-D-xylulose 5-phosphate contacts are provided by S218, N223, K224, and E227. Residue E227 participates in Mn(2+) binding.

It belongs to the DXR family. It depends on Mg(2+) as a cofactor. Mn(2+) is required as a cofactor.

The catalysed reaction is 2-C-methyl-D-erythritol 4-phosphate + NADP(+) = 1-deoxy-D-xylulose 5-phosphate + NADPH + H(+). Its pathway is isoprenoid biosynthesis; isopentenyl diphosphate biosynthesis via DXP pathway; isopentenyl diphosphate from 1-deoxy-D-xylulose 5-phosphate: step 1/6. Functionally, catalyzes the NADPH-dependent rearrangement and reduction of 1-deoxy-D-xylulose-5-phosphate (DXP) to 2-C-methyl-D-erythritol 4-phosphate (MEP). The chain is 1-deoxy-D-xylulose 5-phosphate reductoisomerase from Rhizobium etli (strain ATCC 51251 / DSM 11541 / JCM 21823 / NBRC 15573 / CFN 42).